A 253-amino-acid chain; its full sequence is 1-(5-phosphoribosyl)-5-[(5-phosphoribosylamino)methylideneamino] imidazole-4-carboxamide isomerase (253 aa).

Aspartate 8 functions as the Proton acceptor in the catalytic mechanism. Aspartate 131 serves as the catalytic Proton donor.

This sequence belongs to the HisA/HisF family.

The protein localises to the cytoplasm. The catalysed reaction is 1-(5-phospho-beta-D-ribosyl)-5-[(5-phospho-beta-D-ribosylamino)methylideneamino]imidazole-4-carboxamide = 5-[(5-phospho-1-deoxy-D-ribulos-1-ylimino)methylamino]-1-(5-phospho-beta-D-ribosyl)imidazole-4-carboxamide. It participates in amino-acid biosynthesis; L-histidine biosynthesis; L-histidine from 5-phospho-alpha-D-ribose 1-diphosphate: step 4/9. This chain is 1-(5-phosphoribosyl)-5-[(5-phosphoribosylamino)methylideneamino] imidazole-4-carboxamide isomerase, found in Polynucleobacter necessarius subsp. necessarius (strain STIR1).